We begin with the raw amino-acid sequence, 272 residues long: HTH-type transcriptional repressor AllR (272 aa).

The tract at residues 1-20 is disordered; that stretch reads MTEVRRRGRPGQQEPSAQKG. The HTH iclR-type domain maps to 21–83; the sequence is AQALERGIAI…SQLGWWHIGL (63 aa). The H-T-H motif DNA-binding region spans 43–62; it reads VSDISLNLDLPLSTTFRLLK. The IclR-ED domain occupies 98-267; the sequence is VLSVGGPFMR…ARNISTALGL (170 aa). Glyoxylate contacts are provided by residues 154-156, Asp207, Cys217, and 234-236; these read SGA and SIS.

Negative regulator of allantoin and glyoxylate utilization operons. Binds to the gcl promoter and to the allS-allA intergenic region. This chain is HTH-type transcriptional repressor AllR (allR), found in Klebsiella pneumoniae.